A 95-amino-acid polypeptide reads, in one-letter code: UPF0235 protein AnaeK_1146 (95 aa).

This sequence belongs to the UPF0235 family.

The sequence is that of UPF0235 protein AnaeK_1146 from Anaeromyxobacter sp. (strain K).